A 611-amino-acid chain; its full sequence is Rho GTPase-activating protein gacN (611 aa).

Residues 24–219 (KTFKKILKPG…VLIEEFHVLY (196 aa)) form the Rho-GAP domain. The stretch at 236 to 499 (IREDKRSTSE…TKLQKSSSSS (264 aa)) forms a coiled coil. Basic and acidic residues predominate over residues 476–491 (NQLEKEKSKLQDELTK). The disordered stretch occupies residues 476 to 550 (NQLEKEKSKL…TTPPPPLDED (75 aa)). Composition is skewed to low complexity over residues 495–509 (SSSS…SSSS) and 527–540 (TTTT…AQQP).

The protein localises to the cytoplasm. Its function is as follows. Rho GTPase-activating protein involved in the signal transduction pathway. In Dictyostelium discoideum (Social amoeba), this protein is Rho GTPase-activating protein gacN (gacN).